The chain runs to 205 residues: Ribosomal RNA small subunit methyltransferase G (205 aa).

Residues Gly-73, Leu-78, 124-125 (VE), and Arg-139 each bind S-adenosyl-L-methionine.

Belongs to the methyltransferase superfamily. RNA methyltransferase RsmG family.

The protein resides in the cytoplasm. It carries out the reaction guanosine(527) in 16S rRNA + S-adenosyl-L-methionine = N(7)-methylguanosine(527) in 16S rRNA + S-adenosyl-L-homocysteine. Its function is as follows. Specifically methylates the N7 position of guanine in position 527 of 16S rRNA. The polypeptide is Ribosomal RNA small subunit methyltransferase G (Erwinia tasmaniensis (strain DSM 17950 / CFBP 7177 / CIP 109463 / NCPPB 4357 / Et1/99)).